A 266-amino-acid polypeptide reads, in one-letter code: Glutamate racemase (266 aa).

Substrate is bound by residues 9-10 (DS) and 41-42 (YG). Residue Cys72 is the Proton donor/acceptor of the active site. 73-74 (NT) provides a ligand contact to substrate. The active-site Proton donor/acceptor is the Cys184. Substrate is bound at residue 185 to 186 (TH).

The protein belongs to the aspartate/glutamate racemases family.

It catalyses the reaction L-glutamate = D-glutamate. The protein operates within cell wall biogenesis; peptidoglycan biosynthesis. Provides the (R)-glutamate required for cell wall biosynthesis. The polypeptide is Glutamate racemase (Staphylococcus aureus (strain bovine RF122 / ET3-1)).